A 110-amino-acid chain; its full sequence is Iron-sulfur cluster assembly protein CyaY (110 aa).

The protein belongs to the frataxin family.

Its function is as follows. Involved in iron-sulfur (Fe-S) cluster assembly. May act as a regulator of Fe-S biogenesis. The polypeptide is Iron-sulfur cluster assembly protein CyaY (Azotobacter vinelandii (strain DJ / ATCC BAA-1303)).